The chain runs to 481 residues: Ribosomal RNA small subunit methyltransferase F (481 aa).

S-adenosyl-L-methionine-binding positions include 119-125 (ASAPGSK), glutamate 143, aspartate 170, and aspartate 188. Cysteine 241 serves as the catalytic Nucleophile.

Belongs to the class I-like SAM-binding methyltransferase superfamily. RsmB/NOP family.

Its subcellular location is the cytoplasm. The enzyme catalyses cytidine(1407) in 16S rRNA + S-adenosyl-L-methionine = 5-methylcytidine(1407) in 16S rRNA + S-adenosyl-L-homocysteine + H(+). Its function is as follows. Specifically methylates the cytosine at position 1407 (m5C1407) of 16S rRNA. In Shewanella sp. (strain MR-4), this protein is Ribosomal RNA small subunit methyltransferase F.